A 195-amino-acid chain; its full sequence is MKIGVLALQGAVSEHIRLLTNSGAEAIEIKRADQLAEVDGLILPGGESTAMRRLIDKYQLFKPLREFGESGKPILGTCAGLILMAKTLSGEQDGHLGFIDMVVERNAFGRQRDSFEATLDVKGVAEKLTAVFIRAPLVKEVGPDVDILSEYNGEIVAVKQGSFLACSFHPELTDDARLHQAFIKMVAERSVLEAH.

Position 46–48 (46–48) interacts with L-glutamine; the sequence is GES. The active-site Nucleophile is cysteine 78. Residues arginine 105 and 133–134 each bind L-glutamine; that span reads IR. Active-site charge relay system residues include histidine 169 and glutamate 171.

This sequence belongs to the glutaminase PdxT/SNO family. As to quaternary structure, in the presence of PdxS, forms a dodecamer of heterodimers. Only shows activity in the heterodimer.

It catalyses the reaction aldehydo-D-ribose 5-phosphate + D-glyceraldehyde 3-phosphate + L-glutamine = pyridoxal 5'-phosphate + L-glutamate + phosphate + 3 H2O + H(+). The catalysed reaction is L-glutamine + H2O = L-glutamate + NH4(+). The protein operates within cofactor biosynthesis; pyridoxal 5'-phosphate biosynthesis. Functionally, catalyzes the hydrolysis of glutamine to glutamate and ammonia as part of the biosynthesis of pyridoxal 5'-phosphate. The resulting ammonia molecule is channeled to the active site of PdxS. The polypeptide is Pyridoxal 5'-phosphate synthase subunit PdxT (Shouchella clausii (strain KSM-K16) (Alkalihalobacillus clausii)).